The following is a 230-amino-acid chain: Protein-L-isoaspartate O-methyltransferase 1 (230 aa).

Serine 65 is an active-site residue.

This sequence belongs to the methyltransferase superfamily. L-isoaspartyl/D-aspartyl protein methyltransferase family. As to quaternary structure, monomer. In terms of tissue distribution, expressed in roots, rosette leaves, stems, cauline leaves, flowers and developing seeds.

The protein localises to the cytoplasm. The enzyme catalyses [protein]-L-isoaspartate + S-adenosyl-L-methionine = [protein]-L-isoaspartate alpha-methyl ester + S-adenosyl-L-homocysteine. Its function is as follows. Catalyzes the methyl esterification of L-isoaspartyl residues in peptides and proteins that result from spontaneous decomposition of normal L-aspartyl and L-asparaginyl residues. It plays a role in the repair and/or degradation of damaged proteins. Contributes to seed longevity and germination vigor by limiting the abnormal accumulation of the L-isoaspartyl residues in seed proteins. The polypeptide is Protein-L-isoaspartate O-methyltransferase 1 (PIMT1) (Arabidopsis thaliana (Mouse-ear cress)).